The sequence spans 700 residues: MARKTPIERYRNIGISAHIDAGKTTTTERILFYTGVNHKIGEVHDGAATMDWMEQEQERGITITSAATTAFWKGMGGNYPEHRINIIDTPGHVDFTIEVERSMRVLDGACMVYCAVGGVQPQSETVWRQANKYKVPRLAFVNKMDRTGANFFKVYDQLRLRLKANPVPVVVPIGAEENFKGVVDLIKMKAIIWDEASQGTKFDYVDIPAELAETCKEWREKMVEVAAEASEDLMNKYLEEGDLPEADIVKALRDRTIACEIQPMLCGTAFKNKGVQRMLDAVIDFLPSPVDIPPVKGELENGEEAERKASDEEKFSSLAFKIMTDPFVGQLIFFRVYSGVVNSGDTLLNSTKGKKERLGRILQMHANQREEIKEVRAGDIAAAVGLKEATTGDTLCDPANPIVLERMVFPEPVISQAVEPKTKADQEKMGLALNRLAQEDPSFRVQTDEESGQTIISGMGELHLEILVDRMKREFGVEATVGKPQVAYRETIRSTAKDVDGKFVKQSGGRGQYGHAVITLEPNEQGKGYEFFDEIKGGVIPREYIPAVDKGIQDTLKSGVLAGFPVVDVKVHLTFGSYHDVDSNENAFRMAGSMAFKEAMRKANPVVLEPMMAVEVETPEDYMGNVMGDLSGRRGIVQGMEDMVGGGKIVRAEVPLSEMFGYSTSLRSLAQGRATYTMEFKHYAEAPRNVAEAIISAKSK.

In terms of domain architecture, tr-type G spans 8-290 (ERYRNIGISA…AVIDFLPSPV (283 aa)). Residues 17-24 (AHIDAGKT), 88-92 (DTPGH), and 142-145 (NKMD) each bind GTP.

The protein belongs to the TRAFAC class translation factor GTPase superfamily. Classic translation factor GTPase family. EF-G/EF-2 subfamily.

The protein resides in the cytoplasm. Its function is as follows. Catalyzes the GTP-dependent ribosomal translocation step during translation elongation. During this step, the ribosome changes from the pre-translocational (PRE) to the post-translocational (POST) state as the newly formed A-site-bound peptidyl-tRNA and P-site-bound deacylated tRNA move to the P and E sites, respectively. Catalyzes the coordinated movement of the two tRNA molecules, the mRNA and conformational changes in the ribosome. This chain is Elongation factor G 2, found in Burkholderia orbicola (strain AU 1054).